The sequence spans 357 residues: Decapping nuclease RAI1 (357 aa).

Residue Glu157 participates in a divalent metal cation binding. 2 residues coordinate substrate: Cys189 and Glu206. 3 residues coordinate a divalent metal cation: Asp208, Glu226, and Leu227. 2 residues coordinate substrate: Lys228 and Gln252.

It belongs to the DXO/Dom3Z family. In terms of assembly, interacts with rat1; the interaction is direct, stabilizes rat1 protein structure and stimulates its exoribonuclease activity. The interaction also stimulates rai1 pyrophosphohydrolase activity, probably by recruiting it to mRNA substrates. It depends on a divalent metal cation as a cofactor.

The protein localises to the nucleus. The enzyme catalyses a 5'-end NAD(+)-phospho-ribonucleoside in mRNA + H2O = a 5'-end phospho-ribonucleoside in mRNA + NAD(+) + H(+). The catalysed reaction is a 5'-end (N(7)-methyl 5'-triphosphoguanosine)-ribonucleoside-ribonucleotide in mRNA + H2O = a (N(7)-methyl 5'-triphosphoguanosine)-nucleoside + a 5'-end phospho-ribonucleoside in mRNA + H(+). It catalyses the reaction a 5'-end triphospho-ribonucleoside in mRNA + H2O = a 5'-end phospho-ribonucleoside in mRNA + diphosphate + H(+). Its function is as follows. Decapping enzyme for NAD-capped RNAs: specifically hydrolyzes the nicotinamide adenine dinucleotide (NAD) cap from a subset of RNAs by removing the entire NAD moiety from the 5'-end of an NAD-capped RNA. The NAD-cap is present at the 5'-end of some RNAs and snoRNAs. In contrast to the canonical 5'-end N7 methylguanosine (m7G) cap, the NAD cap promotes mRNA decay. Also acts as a non-canonical decapping enzyme that removes the entire cap structure of m7G capped or incompletely capped RNAs. Has decapping activity toward incomplete 5'-end m7G cap mRNAs such as unmethylated 5'-end-capped RNA (cap0), while it has no activity toward 2'-O-ribose methylated m7G cap (cap1). Also possesses RNA 5'-pyrophosphohydrolase activity by hydrolyzing the 5'-end triphosphate to release pyrophosphates. Stimulates exoribonuclease activity of Rat1, allowing it to degrade RNAs with stable secondary structure more effectively. The chain is Decapping nuclease RAI1 (rai1) from Emericella nidulans (strain FGSC A4 / ATCC 38163 / CBS 112.46 / NRRL 194 / M139) (Aspergillus nidulans).